The sequence spans 260 residues: MGRVIRAQRKGAAGSVFKSHTHHRKGPAKFRSLDYGERNGYLKGLVTEIIHDPGRGAPLARVAFRHPFRYMKQKELFVAAEGMYTGQYLYCGKKANLMVGNVLPLGSIPEGAVICNVELHVGDRGALARASGDYAIVIAHNPESNTTRVKLPSGSKKILPSACRAMIGQVAGGGRTEKPLLKAGNAYHKYKAKRNCWPVVRGVAMNPVEHPHGGGNHQHIGHASTVRRDKSAGAKVGQIAARRTGRRRGAAATLAAKADY.

The interval 227 to 248 is disordered; it reads RRDKSAGAKVGQIAARRTGRRR.

It belongs to the universal ribosomal protein uL2 family.

This is Large ribosomal subunit protein uL2y (RPL8B) from Arabidopsis thaliana (Mouse-ear cress).